A 141-amino-acid chain; its full sequence is Translation initiation factor 2 subunit beta (141 aa).

It belongs to the eIF-2-beta/eIF-5 family. Heterotrimer composed of an alpha, a beta and a gamma chain.

Its function is as follows. eIF-2 functions in the early steps of protein synthesis by forming a ternary complex with GTP and initiator tRNA. The chain is Translation initiation factor 2 subunit beta from Sulfolobus acidocaldarius (strain ATCC 33909 / DSM 639 / JCM 8929 / NBRC 15157 / NCIMB 11770).